The following is a 154-amino-acid chain: Putative pre-16S rRNA nuclease (154 aa).

The protein belongs to the YqgF nuclease family.

Its subcellular location is the cytoplasm. In terms of biological role, could be a nuclease involved in processing of the 5'-end of pre-16S rRNA. This is Putative pre-16S rRNA nuclease from Rickettsia bellii (strain OSU 85-389).